The following is a 673-amino-acid chain: MSRTKDPAKQAEDLREKLRYHEHRYYVLDDPEISDADYDVMMNELKALEAKHPELLTPDSPTQRVGGKPREGFVKVAHSAPMLSLDNAYNEEELRDWARRVEELSGKAEIEYECELKLDGLSMALRYQDARFVLAVTRGDGSIGEDVTLNLRTVKSVPLGVSSATLKKTHMLGDFEVRGEVIFPTKSFEKMNEDREKQGLAKFANPRNAAAGAVRVLEPNITAQRRLDFYAYFLLVDGRVHIDRQSEALDTLEKLGFKVNSNRAVFKSIDDVLKFIHKKEEDREKLPYEIDGVVIKVNSTALWQRLGFTGKAPRWAIAYKYAARAAVTQVEDILVQVGRTGKLTPVAALKPVPIGGTTVSRATLHNMDEIDRLGLLIGDWVQVERGGDVIPKVVKVIDDKDHPRGKKKFKMPERCPECGGHVVRTEGEADHRCVNANCPAKLRESILHFASRGVMNIEGMGDSLVNQLVDRGLVKNVADIYELDEEKLLSLERMGKKSAQNILDEIKGTKKLPLERVIYGLGIRMVGERTAQFLAEHFGSLDGVMKATEEELLEVEEVGPRIAQSIHEFFAEPSNRELVKRLEAAGLQFKGVKKERGTALAGQTFVLTGSLPTYSRDEAKKLIEDAGGKVSGSVSKKTNYVVAGEEAGSKLDKARDLGVAVIDEDALKKLLGK.

NAD(+) contacts are provided by residues 35–39 (DADYD), 84–85 (SL), and glutamate 115. Residue lysine 117 is the N6-AMP-lysine intermediate of the active site. The NAD(+) site is built by arginine 138, glutamate 180, lysine 296, and lysine 320. Positions 415, 418, 433, and 438 each coordinate Zn(2+). Residues 595–673 (ERGTALAGQT…EDALKKLLGK (79 aa)) form the BRCT domain.

It belongs to the NAD-dependent DNA ligase family. LigA subfamily. Mg(2+) serves as cofactor. Requires Mn(2+) as cofactor.

The enzyme catalyses NAD(+) + (deoxyribonucleotide)n-3'-hydroxyl + 5'-phospho-(deoxyribonucleotide)m = (deoxyribonucleotide)n+m + AMP + beta-nicotinamide D-nucleotide.. Functionally, DNA ligase that catalyzes the formation of phosphodiester linkages between 5'-phosphoryl and 3'-hydroxyl groups in double-stranded DNA using NAD as a coenzyme and as the energy source for the reaction. It is essential for DNA replication and repair of damaged DNA. This Koribacter versatilis (strain Ellin345) protein is DNA ligase.